The following is a 514-amino-acid chain: 2'-5'-oligoadenylate synthase-like protein (514 aa).

Ala2 carries the N-acetylalanine modification. Ubiquitin-like domains are found at residues 354–433 and 434–509; these read IHLT…IPSE and IQVF…KGEA.

It belongs to the 2-5A synthase family. In terms of assembly, specifically interacts with the ligand binding domain of the thyroid receptor (TR). TRIP14 does not require the presence of thyroid hormone for its interaction. Binds MBD1. In terms of tissue distribution, expressed in most tissues, with the highest levels in primary blood Leukocytes and other hematopoietic system tissues, colon, stomach and to some extent in testis.

The protein localises to the nucleus. It is found in the nucleolus. It localises to the cytoplasm. Functionally, does not have 2'-5'-OAS activity, but can bind double-stranded RNA. Displays antiviral activity against encephalomyocarditis virus (EMCV) and hepatitis C virus (HCV) via an alternative antiviral pathway independent of RNase L. The sequence is that of 2'-5'-oligoadenylate synthase-like protein (OASL) from Homo sapiens (Human).